Here is a 505-residue protein sequence, read N- to C-terminus: MTEQTPAPQPPADENSLIAERRAKLGALRGQGIAYPNDFVREHFAGDLQAEFADADTWTPEALEASGRTVRMAGRLMAKRVMGKASFAQIQDESGRVQLFLQGNVLGDAYTAFKGWDVGDIVAVEGGLTRTKTGELSVKASALRLLTKSLRPLPDKWHGLSDVEQRYRQRYVDLIVTPEAREVFIKRSKIIRAMRAWLDARRFLEVETPMMHYIPGGATAKPFTTHHNALDLDLYLRVAPELYLKRLVVGGLERVYEINRNFRNEGVSTRHNPEFTMLELYEAYATYHQIMDLTEQVIRDTAQSVLGTTQVSWDGADIDLAPAFRRWRMDEAVRHHNPEISAADCTDREALLRHCERLKIRVKPSYGWGKLLLEIFEATVEHTLVQPTFITDHPVEVSPLARSSDTEPGYTDRFELFINGKELANGFSELNDPEDQAARFQAQVQAKDGGDDEAMHFDADYIRALEYGMAPTGGLGIGIDRLVMLLTGSTSIRDVLLFPYMRPEA.

Residues glutamate 415 and glutamate 422 each contribute to the Mg(2+) site.

Belongs to the class-II aminoacyl-tRNA synthetase family. In terms of assembly, homodimer. Requires Mg(2+) as cofactor.

It localises to the cytoplasm. The enzyme catalyses tRNA(Lys) + L-lysine + ATP = L-lysyl-tRNA(Lys) + AMP + diphosphate. The sequence is that of Lysine--tRNA ligase from Xanthomonas axonopodis pv. citri (strain 306).